The sequence spans 254 residues: MKANVYSMEGEVKEEIELPAIFNEEYRPDLIKRAVISAQTARVQPWGNDPEAGKRTSAKGWGSGRGTARVPRIKNGSKAAFVPMAVGGRRAHPTRAEKNHHEKINIKERRFAIRSAVAATANKELVENRGHRLGDLEQVPIIVEDDICSVKTTKQTREIFQNLGVYDDITRAKEGKRIRAGRGKTRGRKYKKVKGPLLVVGEDNGIKLGARNHAGVDVVTVENLNAELLAPGTHPGRLTIFTKSAVEKLGGLFQ.

Residues 45–70 (PWGNDPEAGKRTSAKGWGSGRGTARV) form a disordered region.

This sequence belongs to the universal ribosomal protein uL4 family. Part of the 50S ribosomal subunit.

In terms of biological role, one of the primary rRNA binding proteins, this protein initially binds near the 5'-end of the 23S rRNA. It is important during the early stages of 50S assembly. It makes multiple contacts with different domains of the 23S rRNA in the assembled 50S subunit and ribosome. Functionally, forms part of the polypeptide exit tunnel. The polypeptide is Large ribosomal subunit protein uL4 (Methanobrevibacter smithii (strain ATCC 35061 / DSM 861 / OCM 144 / PS)).